The primary structure comprises 253 residues: 5'/3'-nucleotidase SurE (253 aa).

4 residues coordinate a divalent metal cation: aspartate 8, aspartate 9, serine 39, and asparagine 92.

The protein belongs to the SurE nucleotidase family. A divalent metal cation serves as cofactor.

Its subcellular location is the cytoplasm. It carries out the reaction a ribonucleoside 5'-phosphate + H2O = a ribonucleoside + phosphate. The enzyme catalyses a ribonucleoside 3'-phosphate + H2O = a ribonucleoside + phosphate. The catalysed reaction is [phosphate](n) + H2O = [phosphate](n-1) + phosphate + H(+). Its function is as follows. Nucleotidase with a broad substrate specificity as it can dephosphorylate various ribo- and deoxyribonucleoside 5'-monophosphates and ribonucleoside 3'-monophosphates with highest affinity to 3'-AMP. Also hydrolyzes polyphosphate (exopolyphosphatase activity) with the preference for short-chain-length substrates (P20-25). Might be involved in the regulation of dNTP and NTP pools, and in the turnover of 3'-mononucleotides produced by numerous intracellular RNases (T1, T2, and F) during the degradation of various RNAs. This Salmonella paratyphi A (strain AKU_12601) protein is 5'/3'-nucleotidase SurE.